The primary structure comprises 229 residues: MAKKGKKYQDALKQIDANKVYTAEEAVELAKKIDFAKFDATVEVAFRLGVDPKKADQQIRGAVVLPNGTGKTQRVLVFAKGEKAKEAEAAGADYVGESEFVEKINQGWFDFDVIVATPDMMGEVGKLGRVLGPKGLMPNPKTGTVTMDVTKAVNEIKAGKVEYRVDKAGNVHAAIGKVSFDAAKLVENFRTVNDVLQKAKPAAAKGTYVKNLSVTTTFGPGIKVDPASL.

This sequence belongs to the universal ribosomal protein uL1 family. In terms of assembly, part of the 50S ribosomal subunit.

Its function is as follows. Binds directly to 23S rRNA. The L1 stalk is quite mobile in the ribosome, and is involved in E site tRNA release. Functionally, protein L1 is also a translational repressor protein, it controls the translation of the L11 operon by binding to its mRNA. This Listeria monocytogenes serovar 1/2a (strain ATCC BAA-679 / EGD-e) protein is Large ribosomal subunit protein uL1.